A 67-amino-acid chain; its full sequence is Prokaryotic ubiquitin-like protein Pup (67 aa).

Residues M1–D13 show a composition bias toward low complexity. The segment at M1–G48 is disordered. The interval P25 to F61 is ARC ATPase binding. A compositionally biased stretch (acidic residues) spans G38 to G48. A Deamidated glutamine modification is found at Q67. An Isoglutamyl lysine isopeptide (Gln-Lys) (interchain with K-? in acceptor proteins) cross-link involves residue Q67.

It belongs to the prokaryotic ubiquitin-like protein family. Strongly interacts with the proteasome-associated ATPase ARC through a hydrophobic interface; the interacting region of Pup lies in its C-terminal half. There is one Pup binding site per ARC hexamer ring. Is modified by deamidation of its C-terminal glutamine to glutamate by the deamidase Dop, a prerequisite to the subsequent pupylation process.

The protein operates within protein degradation; proteasomal Pup-dependent pathway. Its function is as follows. Protein modifier that is covalently attached to lysine residues of substrate proteins, thereby targeting them for proteasomal degradation. The tagging system is termed pupylation. The sequence is that of Prokaryotic ubiquitin-like protein Pup from Pseudarthrobacter chlorophenolicus (strain ATCC 700700 / DSM 12829 / CIP 107037 / JCM 12360 / KCTC 9906 / NCIMB 13794 / A6) (Arthrobacter chlorophenolicus).